Reading from the N-terminus, the 467-residue chain is Glutamate--tRNA ligase (467 aa).

Positions 9–19 (PSPTGYLHIGG) match the 'HIGH' region motif. Positions 237–241 (KLSKR) match the 'KMSKS' region motif. Lys240 contributes to the ATP binding site.

It belongs to the class-I aminoacyl-tRNA synthetase family. Glutamate--tRNA ligase type 1 subfamily. Monomer.

It localises to the cytoplasm. The enzyme catalyses tRNA(Glu) + L-glutamate + ATP = L-glutamyl-tRNA(Glu) + AMP + diphosphate. Catalyzes the attachment of glutamate to tRNA(Glu) in a two-step reaction: glutamate is first activated by ATP to form Glu-AMP and then transferred to the acceptor end of tRNA(Glu). The protein is Glutamate--tRNA ligase of Xanthomonas oryzae pv. oryzae (strain MAFF 311018).